Consider the following 386-residue polypeptide: Bifunctional desaturase/conjugase FADX (386 aa).

Positions 1 to 28 (MGAGGRMSVAPNNSKCEKKESRSVKRVP) are disordered. 2 helical membrane passes run 65–85 (LSFI…SPIT) and 87–107 (IAWP…WVLG). The short motif at 108–112 (HECGH) is the Histidine box-1 element. The short motif at 144 to 148 (HRRHH) is the Histidine box-2 element. A run of 3 helical transmembrane segments spans residues 182–202 (ALTL…FNVS), 228–248 (IYIS…IAMA), and 250–270 (GLAW…ALVV). Residues 318–322 (HVIHH) carry the Histidine box-3 motif.

Belongs to the fatty acid desaturase type 1 family. As to expression, expressed exclusively in developing seeds.

Its subcellular location is the endoplasmic reticulum membrane. The enzyme catalyses a (9Z,12Z)-octadecadienoyl-containing glycerolipid + 2 Fe(II)-[cytochrome b5] + O2 + 2 H(+) = a (9Z,11E,13E)-octadecatrienoyl-containing glycerolipid + 2 Fe(III)-[cytochrome b5] + 2 H2O. The catalysed reaction is (9Z,12Z,15Z)-octadecatrienoyl-containing glycerolipid + 2 Fe(II)-[cytochrome b5] + O2 + 2 H(+) = a (9Z,11E,13E,15Z)-octadecatetraenoyl-containing glycerolipid + 2 Fe(III)-[cytochrome b5] + 2 H2O. It catalyses the reaction a (9Z)-octadecenoyl-containing glycerolipid + 2 Fe(II)-[cytochrome b5] + O2 + 2 H(+) = a (9Z,12E)-octadecadienoyl-containing glycerolipid + 2 Fe(III)-[cytochrome b5] + 2 H2O. It carries out the reaction a (9Z)-hexadecenoyl-containing glycerolipid + 2 Fe(II)-[cytochrome b5] + O2 + 2 H(+) = a (9Z,12E)-hexadecadienoyl-containing glycerolipid + 2 Fe(III)-[cytochrome b5] + 2 H2O. Its pathway is lipid metabolism; polyunsaturated fatty acid biosynthesis. Converts linoleic acid to alpha-eleostearic acid (18:3(9Z,11E,13E)) and alpha-linolenic acid to alpha-parinaric acid (18:4(9Z,11E,13E,15Z)). Converts a single cis double bond at carbon 12 to two conjugated trans bonds at positions 11 and 13. Can also act as a 12(E) desaturase when acting on the monounsaturated fatty acids oleate and palmitoleate, stereoselectively introducing a trans double bond. The polypeptide is Bifunctional desaturase/conjugase FADX (Vernicia fordii (Tung)).